A 388-amino-acid polypeptide reads, in one-letter code: UPF0229 protein BH1031 (388 aa).

Residues 80–117 are disordered; the sequence is HVGQGDGDSQVGDVIARDPSAGQQGPGKGQGAGDQPGE. Residues 103–113 show a composition bias toward gly residues; that stretch reads QGPGKGQGAGD.

The protein belongs to the UPF0229 family.

The chain is UPF0229 protein BH1031 from Halalkalibacterium halodurans (strain ATCC BAA-125 / DSM 18197 / FERM 7344 / JCM 9153 / C-125) (Bacillus halodurans).